Reading from the N-terminus, the 358-residue chain is MPLMNPLNPWPLESSNPLIAVLVSGGIDSLVAAHLLKQSGADVTAIHFLTGYEPEDRAGRLEKLFTQMDIPVFIFDCRTVFQSNVVDYFTAAYLRGETPNPCMVCNSRIKFGACMDYARSLGADAVATGHYCRTTKDPDGVRLWKGADPAKEQSYFLAFLSQDQLGRARFPLERMTKDQVRAHAARHGLVPIESKESQDVCFIRGEECADFIEAQVPAIPGPGPIEDMTGRLIGTHSGLHRFTVGQRRGINCPAEQPYYVAALDMARNCLKVGFRQDLFVPVCRVAQVNWIPDRPKGSMNVSVKIRYNQTEVPARLTALGETDAVVEFVTPQFAVAPGQGAVFYDGDAVLGGGIIRAE.

ATP-binding positions include 22 to 29 (LVSGGIDS) and Phe48. The active-site Nucleophile is the Cys105. A disulfide bridge connects residues Cys105 and Cys201. Gly129 is an ATP binding site. Residues 151 to 153 (KEQ) are interaction with tRNA. Cys201 functions as the Cysteine persulfide intermediate in the catalytic mechanism. Positions 306-307 (RY) are interaction with tRNA.

It belongs to the MnmA/TRMU family.

The protein resides in the cytoplasm. The catalysed reaction is S-sulfanyl-L-cysteinyl-[protein] + uridine(34) in tRNA + AH2 + ATP = 2-thiouridine(34) in tRNA + L-cysteinyl-[protein] + A + AMP + diphosphate + H(+). In terms of biological role, catalyzes the 2-thiolation of uridine at the wobble position (U34) of tRNA, leading to the formation of s(2)U34. The sequence is that of tRNA-specific 2-thiouridylase MnmA from Desulfosudis oleivorans (strain DSM 6200 / JCM 39069 / Hxd3) (Desulfococcus oleovorans).